The following is a 290-amino-acid chain: Lipoyl synthase (290 aa).

The [4Fe-4S] cluster site is built by Cys38, Cys43, Cys49, Cys64, Cys68, Cys71, and Ser277. In terms of domain architecture, Radical SAM core spans 50–266 (WSKGTATFLL…REIALDAGFR (217 aa)).

This sequence belongs to the radical SAM superfamily. Lipoyl synthase family. The cofactor is [4Fe-4S] cluster.

It localises to the cytoplasm. The catalysed reaction is [[Fe-S] cluster scaffold protein carrying a second [4Fe-4S](2+) cluster] + N(6)-octanoyl-L-lysyl-[protein] + 2 oxidized [2Fe-2S]-[ferredoxin] + 2 S-adenosyl-L-methionine + 4 H(+) = [[Fe-S] cluster scaffold protein] + N(6)-[(R)-dihydrolipoyl]-L-lysyl-[protein] + 4 Fe(3+) + 2 hydrogen sulfide + 2 5'-deoxyadenosine + 2 L-methionine + 2 reduced [2Fe-2S]-[ferredoxin]. The protein operates within protein modification; protein lipoylation via endogenous pathway; protein N(6)-(lipoyl)lysine from octanoyl-[acyl-carrier-protein]: step 2/2. Catalyzes the radical-mediated insertion of two sulfur atoms into the C-6 and C-8 positions of the octanoyl moiety bound to the lipoyl domains of lipoate-dependent enzymes, thereby converting the octanoylated domains into lipoylated derivatives. This Chlorobaculum tepidum (strain ATCC 49652 / DSM 12025 / NBRC 103806 / TLS) (Chlorobium tepidum) protein is Lipoyl synthase.